The sequence spans 687 residues: POZ-, AT hook-, and zinc finger-containing protein 1 (687 aa).

Residues 41 to 130 (CDVLLRVGDE…AYTSRIVVRL (90 aa)) form the BTB domain. Residue Lys112 forms a Glycyl lysine isopeptide (Lys-Gly) (interchain with G-Cter in SUMO2) linkage. A compositionally biased stretch (low complexity) spans 250 to 260 (PFPSVASSAPP). A disordered region spans residues 250 to 278 (PFPSVASSAPPLTGKRGRGRPRKANLLDS). A DNA-binding region (a.T hook) is located at residues 264–276 (KRGRGRPRKANLL). Residue Lys272 forms a Glycyl lysine isopeptide (Lys-Gly) (interchain with G-Cter in SUMO2) linkage. Residue Ser282 is modified to Phosphoserine. Residues 292–314 (LPCGLCGKVFTDANRLRQHEAQH) form a C2H2-type 1 zinc finger. Positions 332–351 (GENGLPISEDPDGPRKRSRT) are disordered. 5 consecutive C2H2-type zinc fingers follow at residues 355 to 377 (VACE…KLSH), 383 to 405 (YSCP…VRSH), 413 to 436 (YICQ…KQVH), 442 to 464 (HKCQ…LACH), and 495 to 518 (NFCS…KTHH). A compositionally biased stretch (basic and acidic residues) spans 549–558 (EGQKCSHQDP). A disordered region spans residues 549–603 (EGQKCSHQDPIESSDSYGDLSDASDLKTPEKQSANGSFSCDMAVPKNKMESDGEK). Residues 605-628 (YPCPECGSFFRSKSYLNKHIQKVH) form a C2H2-type 7 zinc finger.

This sequence belongs to the krueppel C2H2-type zinc-finger protein family. Homodimer. Interacts with RNF4. Interacts (via C-terminus) with TP53; this interaction inhibits TP53 ability to activate transcription. As to expression, ubiquitous.

The protein localises to the nucleus. Functionally, transcriptional regulator that plays a role in many biological processes such as embryogenesis, senescence, T-cell development or neurogenesis. Interacts with the TP53 protein to control genes that are important in proliferation and in the DNA-damage response. Mechanistically, the interaction inhibits the DNA binding and transcriptional activity of TP53/p53. Part of the transcriptional network modulating regulatory T-cell development and controls the generation of the regulatory T-cell pool under homeostatic conditions. In terms of biological role, (Microbial infection) Plays a positive role in viral cDNA synthesis. This Homo sapiens (Human) protein is POZ-, AT hook-, and zinc finger-containing protein 1 (PATZ1).